Consider the following 399-residue polypeptide: Succinate--CoA ligase [ADP-forming] subunit beta (399 aa).

An ATP-grasp domain is found at 9–254 (KALLREFGVP…ESEEDAKEIE (246 aa)). ATP contacts are provided by residues Lys46, 53-55 (GRG), Glu109, Ser112, and Glu117. Mg(2+) contacts are provided by Asn209 and Asp223. Residues Asn274 and 331–333 (GIM) each bind substrate.

Belongs to the succinate/malate CoA ligase beta subunit family. As to quaternary structure, heterotetramer of two alpha and two beta subunits. It depends on Mg(2+) as a cofactor.

The enzyme catalyses succinate + ATP + CoA = succinyl-CoA + ADP + phosphate. It carries out the reaction GTP + succinate + CoA = succinyl-CoA + GDP + phosphate. It participates in carbohydrate metabolism; tricarboxylic acid cycle; succinate from succinyl-CoA (ligase route): step 1/1. Its function is as follows. Succinyl-CoA synthetase functions in the citric acid cycle (TCA), coupling the hydrolysis of succinyl-CoA to the synthesis of either ATP or GTP and thus represents the only step of substrate-level phosphorylation in the TCA. The beta subunit provides nucleotide specificity of the enzyme and binds the substrate succinate, while the binding sites for coenzyme A and phosphate are found in the alpha subunit. This Nitrobacter winogradskyi (strain ATCC 25391 / DSM 10237 / CIP 104748 / NCIMB 11846 / Nb-255) protein is Succinate--CoA ligase [ADP-forming] subunit beta.